Consider the following 491-residue polypeptide: Probable protein phosphatase 2C 6 (491 aa).

Residues 1 to 16 (MGLCHSKIDKTTRKET) show a composition bias toward basic and acidic residues. Residues 1–39 (MGLCHSKIDKTTRKETGATSTATTTVERQSSGRLRRPRD) form a disordered region. Low complexity predominate over residues 17–28 (GATSTATTTVER). The 313-residue stretch at 64–376 (IACLYTQQGK…DDCAVVCLFL (313 aa)) folds into the PPM-type phosphatase domain. The Mn(2+) site is built by Asp-100, Gly-101, Asp-321, and Asp-367. The tract at residues 391–422 (VNHSHEESTESVTITSSKDADKKEEASTETNE) is disordered.

This sequence belongs to the PP2C family. Mg(2+) serves as cofactor. It depends on Mn(2+) as a cofactor.

It carries out the reaction O-phospho-L-seryl-[protein] + H2O = L-seryl-[protein] + phosphate. The catalysed reaction is O-phospho-L-threonyl-[protein] + H2O = L-threonyl-[protein] + phosphate. This chain is Probable protein phosphatase 2C 6, found in Arabidopsis thaliana (Mouse-ear cress).